Reading from the N-terminus, the 398-residue chain is MDKEKSPAPPCGGLPPPSPSGRCSAFSEAGPIGHGSDANRMSHDISRMLDNPPKKIGHRRAHSEILTLPDDLSFDSDLGVVGNAADGASFSDETEEDLLSMYLDMDKFNSSATSSAQVGEPSGTAWKNETMMQTGTGSTSNPQNTVNSLGERPRIRHQHSQSMDGSMNINEMLMSGNEDDSAIDAKKSMSATKLAELALIDPKRAKRIWANRQSAARSKERKTRYIFELERKVQTLQTEATTLSAQLTLLQRDTNGLTVENNELKLRLQTMEQQVHLQDELNEALKEEIQHLKVLTGQVAPSALNYGSFGSNQQQFYSNNQSMQTILAAKQFQQLQIHSQKQQQQQQQQQQQHQQQQQQQQQYQFQQQQMQQLMQQRLQQQEQQNGVRLKPSQAQKEN.

2 disordered regions span residues 1 to 46 (MDKE…HDIS) and 112 to 150 (ATSS…NSLG). Over residues 7-19 (PAPPCGGLPPPSP) the composition is skewed to pro residues. Positions 125–148 (AWKNETMMQTGTGSTSNPQNTVNS) are enriched in polar residues. The 64-residue stretch at 201 to 264 (DPKRAKRIWA…NGLTVENNEL (64 aa)) folds into the bZIP domain. Positions 203-224 (KRAKRIWANRQSAARSKERKTR) are basic motif. The tract at residues 229 to 264 (LERKVQTLQTEATTLSAQLTLLQRDTNGLTVENNEL) is leucine-zipper.

The protein belongs to the bZIP family.

The protein resides in the nucleus. Its function is as follows. Putative transcription factor with an activatory role. This Arabidopsis thaliana (Mouse-ear cress) protein is Probable transcription factor PosF21 (POSF21).